The sequence spans 501 residues: Aldehyde dehydrogenase, cytosolic 1 (501 aa).

An NAD(+)-binding site is contributed by 246–251 (GSTEVG). Catalysis depends on glutamate 269, which acts as the Proton acceptor. Cysteine 303 serves as the catalytic Nucleophile.

Belongs to the aldehyde dehydrogenase family. Homotetramer. As to expression, eye specific, with very high expression in the lens.

It is found in the cytoplasm. It catalyses the reaction an aldehyde + NAD(+) + H2O = a carboxylate + NADH + 2 H(+). Its pathway is alcohol metabolism; ethanol degradation; acetate from ethanol: step 2/2. Its function is as follows. Major component of the eye of elephant shrews, which in contrast to other mammals, possesses both a lens- and a non-lens class-1 aldehyde dehydrogenase 1. This eye-specific form is a structural protein of the lens and, in other part of the eye, serves as the major form of ALDH1. Can convert/oxidize retinaldehyde to retinoic acid. This is Aldehyde dehydrogenase, cytosolic 1 (ALDH1) from Macroscelides proboscideus (Short-eared elephant shrew).